The primary structure comprises 1131 residues: Protein DWARF 53 (1131 aa).

One can recognise a Clp R domain in the interval 8-181; that stretch reads ARQCLSPAAV…KLAILRPAPP (174 aa). Repeat regions lie at residues 12 to 85 and 103 to 181; these read LSPA…LDRL and VSNS…PAPP. The disordered stretch occupies residues 511–574; sequence NRDPYKPFPR…ISSPSVTNKR (64 aa). Residues 558-569 are compositionally biased toward low complexity; it reads SSSTARPISSPS. The EAR 1 signature appears at 578–582; the sequence is LVLNL. The segment at 588–655 is disordered; it reads KSDENLQERG…KRVEDSERSV (68 aa). The segment covering 597 to 609 has biased composition (polar residues); that stretch reads GMQSQHGTLSNVD. Positions 646–655 are enriched in basic and acidic residues; that stretch reads KRVEDSERSV. Positions 799-803 match the EAR 2 motif; it reads LDLNL. 2 disordered regions span residues 951–970 and 976–1002; these read ISDDQEKLQESPSSSKRLHR and FDLNLPVDEDEPLDADDDSSSHENSYG. The EAR 3 motif lies at 976–981; sequence FDLNLP. Acidic residues predominate over residues 982–993; sequence VDEDEPLDADDD.

Belongs to the ClpA/ClpB family. As to quaternary structure, interacts with D3. Interacts with D14. The interaction with D14 is enhanced in the presence of strigolactones. The interaction with D14 occurs in the presence of (2'R) stereoisomers of strigolactones, but not (2'S) stereoisomers. Interacts with the TOPLESS-related proteins TPR1, TPR2 and TPR3. Interacts with SPL14/IPA1. In terms of processing, polyubiquitinated. Strigolactone, but not karrikin, triggers rapid SCF(D3)-dependent degradation via the proteasome. Expressed in the shoot bases of seedlings, young leaves, axillary buds and young panicles. Expressed in young roots vasculature, culms, internodes and nodes, preferentially in the parenchyma cells surrounding the xylem.

It localises to the nucleus. Its function is as follows. Repressor of strigolactones (SL) signaling. Subjected to a negative feedback control of SL signaling. Suppresses the transcriptional activation activity of SPL14/IPA1 in SL signaling. Acts with SPL14/IPA1 to mediate the SL-regulated tiller development. Subject to a negative feedback regulation by SPL14/IPA1, which binds to D53 promoter to repress D53 gene expression. This Oryza sativa subsp. japonica (Rice) protein is Protein DWARF 53.